Consider the following 201-residue polypeptide: Pyridoxal 5'-phosphate synthase subunit PdxT (201 aa).

48–50 (GES) is a binding site for L-glutamine. Cys80 serves as the catalytic Nucleophile. Residues Arg109 and 137–138 (IR) contribute to the L-glutamine site. Active-site charge relay system residues include His180 and Glu182.

Belongs to the glutaminase PdxT/SNO family. In terms of assembly, in the presence of PdxS, forms a dodecamer of heterodimers. Only shows activity in the heterodimer.

The catalysed reaction is aldehydo-D-ribose 5-phosphate + D-glyceraldehyde 3-phosphate + L-glutamine = pyridoxal 5'-phosphate + L-glutamate + phosphate + 3 H2O + H(+). It carries out the reaction L-glutamine + H2O = L-glutamate + NH4(+). It functions in the pathway cofactor biosynthesis; pyridoxal 5'-phosphate biosynthesis. Functionally, catalyzes the hydrolysis of glutamine to glutamate and ammonia as part of the biosynthesis of pyridoxal 5'-phosphate. The resulting ammonia molecule is channeled to the active site of PdxS. The polypeptide is Pyridoxal 5'-phosphate synthase subunit PdxT (Cutibacterium acnes (strain DSM 16379 / KPA171202) (Propionibacterium acnes)).